The chain runs to 380 residues: Probable transposase for insertion sequence element IS701 (380 aa).

Functionally, involved in the transposition of the insertion sequence. In Microchaete diplosiphon (Fremyella diplosiphon), this protein is Probable transposase for insertion sequence element IS701.